The following is a 458-amino-acid chain: MDVNTLKSVYFIGAGGIGMSALVRYFLSKGKKVGGYDRTPSELTEKLIEEGAAIHYEESTELITDAFRDPATTLVVYTPAVPDTHKEFTYFRENGFEIHKRSQVLGMLTHAGKGLCVAGTHGKTTTSTMTAHLLHQSHVGCNAFLGGISKNYGTNLLLSDSSEYMVIEADEFDRSFHWLSPYISVITATDPDHLDIYGTKEAYLESFRKYTSLIQPGGALIVRKGIELQPALQNGVKLYTYSQEEGDFHAENIRIGNGEIFFDYVSPLGNIPNIQLGVPVSINIENGVAAMALAQMSGLTDEEIKRGMASFRGVDRRFDFKIKNDKVVFLSDYAHHPSEIKQSILSMRALYRDKKLTAVFQPHLYTRTRDFYKDFADSLSLLDEVILVDIYPAREQPIPGVTSKLIYDHLRPGIEKSMCKKEEILDVLSKKDIEVLITLGAGDIDNYVPQICGLLNKK.

Residue glycine 119–threonine 125 participates in ATP binding.

The protein belongs to the MurCDEF family.

The protein resides in the cytoplasm. The enzyme catalyses UDP-N-acetyl-alpha-D-muramate + L-alanine + ATP = UDP-N-acetyl-alpha-D-muramoyl-L-alanine + ADP + phosphate + H(+). It participates in cell wall biogenesis; peptidoglycan biosynthesis. Functionally, cell wall formation. In Phocaeicola vulgatus (strain ATCC 8482 / DSM 1447 / JCM 5826 / CCUG 4940 / NBRC 14291 / NCTC 11154) (Bacteroides vulgatus), this protein is UDP-N-acetylmuramate--L-alanine ligase.